Here is a 419-residue protein sequence, read N- to C-terminus: UDP-N-acetylglucosamine 1-carboxyvinyltransferase (419 aa).

22 to 23 (KN) contributes to the phosphoenolpyruvate binding site. Arginine 95 serves as a coordination point for UDP-N-acetyl-alpha-D-glucosamine. Residue cysteine 119 is the Proton donor of the active site. A 2-(S-cysteinyl)pyruvic acid O-phosphothioketal modification is found at cysteine 119. UDP-N-acetyl-alpha-D-glucosamine is bound by residues 164–167 (KVSV), aspartate 308, and isoleucine 330.

This sequence belongs to the EPSP synthase family. MurA subfamily.

Its subcellular location is the cytoplasm. The enzyme catalyses phosphoenolpyruvate + UDP-N-acetyl-alpha-D-glucosamine = UDP-N-acetyl-3-O-(1-carboxyvinyl)-alpha-D-glucosamine + phosphate. Its pathway is cell wall biogenesis; peptidoglycan biosynthesis. Functionally, cell wall formation. Adds enolpyruvyl to UDP-N-acetylglucosamine. This is UDP-N-acetylglucosamine 1-carboxyvinyltransferase from Rickettsia rickettsii (strain Iowa).